A 181-amino-acid polypeptide reads, in one-letter code: CASP-like protein 1F1 (181 aa).

Topologically, residues 1 to 18 are cytoplasmic; that stretch reads MPNNEAKFSVNQPLKTQK. Residues 19–39 traverse the membrane as a helical segment; the sequence is LFIGVQIFFRIVAIAASVASS. At 40 to 70 the chain is on the extracellular side; it reads WLMITSKQVIDIGGIVLDARYSYSPEFKFLA. The chain crosses the membrane as a helical span at residues 71–91; that stretch reads FTNIVVGCFSLLSLLFLVLVV. Topologically, residues 92-100 are cytoplasmic; sequence RQGSNPNHY. A helical membrane pass occupies residues 101–121; the sequence is FFLFLHDLAMMSLVVGGCAAA. The Extracellular segment spans residues 122–152; it reads TTVGFLGKHGNSHTGWMQICDNFGKFCNRAQ. A helical transmembrane segment spans residues 153 to 173; the sequence is TSVTISYLNLICLSILTITSA. Topologically, residues 174-181 are cytoplasmic; sequence SKSRKMEA.

This sequence belongs to the Casparian strip membrane proteins (CASP) family. As to quaternary structure, homodimer and heterodimers.

It is found in the cell membrane. This Populus trichocarpa (Western balsam poplar) protein is CASP-like protein 1F1.